A 476-amino-acid chain; its full sequence is Sulfate adenylyltransferase subunit 1 (476 aa).

A tr-type G domain is found at 25–241; it reads KSLLRFLTCG…LETVEVQRVV (217 aa). The G1 stretch occupies residues 34–41; it reads GSVDDGKS. GTP is bound at residue 34–41; sequence GSVDDGKS. The segment at 92–96 is G2; that stretch reads GITID. The G3 stretch occupies residues 113–116; sequence DTPG. Residues 113 to 117 and 168 to 171 contribute to the GTP site; these read DTPGH and NKMD. Residues 168 to 171 form a G4 region; the sequence is NKMD. Positions 206–208 are G5; sequence SAL.

Belongs to the TRAFAC class translation factor GTPase superfamily. Classic translation factor GTPase family. CysN/NodQ subfamily. As to quaternary structure, heterodimer composed of CysD, the smaller subunit, and CysN.

It carries out the reaction sulfate + ATP + H(+) = adenosine 5'-phosphosulfate + diphosphate. Its pathway is sulfur metabolism; hydrogen sulfide biosynthesis; sulfite from sulfate: step 1/3. With CysD forms the ATP sulfurylase (ATPS) that catalyzes the adenylation of sulfate producing adenosine 5'-phosphosulfate (APS) and diphosphate, the first enzymatic step in sulfur assimilation pathway. APS synthesis involves the formation of a high-energy phosphoric-sulfuric acid anhydride bond driven by GTP hydrolysis by CysN coupled to ATP hydrolysis by CysD. The protein is Sulfate adenylyltransferase subunit 1 of Erwinia tasmaniensis (strain DSM 17950 / CFBP 7177 / CIP 109463 / NCPPB 4357 / Et1/99).